The following is a 478-amino-acid chain: RNA-binding protein 42 (478 aa).

The span at 1–20 shows a compositional bias: low complexity; that stretch reads MASAMAGAGPAPGLPVAGGP. The segment at 1 to 33 is disordered; the sequence is MASAMAGAGPAPGLPVAGGPVVPGPGVGIPGKS. Residue alanine 2 is modified to N-acetylalanine. Phosphoserine is present on serine 133. 4 positions are modified to asymmetric dimethylarginine: arginine 151, arginine 156, arginine 166, and arginine 179. 2 disordered regions span residues 171-209 and 317-354; these read LSSAAGGPRPMALRPPHQALVGPPLPGPPGPPMMLPPMA and SLRPRPRPPRPEPPPGLMALEVPEPLGEDKKKGKPEKL. The segment covering 193 to 205 has biased composition (pro residues); the sequence is PPLPGPPGPPMML. Residues 234 to 478 form a necessary for interaction with HNRNPK region; it reads DLGLGLGLGL…QKEKKKLGLR (245 aa). The segment covering 343-354 has biased composition (basic and acidic residues); it reads GEDKKKGKPEKL. In terms of domain architecture, RRM spans 379 to 457; it reads FRIFCGDLGN…RPIKLRKSMW (79 aa).

It belongs to the RRM RBM42 family. Interacts with HNRNPK.

Its subcellular location is the nucleus. The protein resides in the cytoplasm. Functionally, binds (via the RRM domain) to the 3' untranslated region (UTR) of p21 mRNA. The protein is RNA-binding protein 42 (Rbm42) of Rattus norvegicus (Rat).